Consider the following 454-residue polypeptide: Lipase member H (454 aa).

The N-terminal stretch at 1–23 (MIYRKIIWGILYVTLMLFDTHRA) is a signal peptide. Asn73, Asn137, and Asn151 each carry an N-linked (GlcNAc...) asparagine glycan. Ser161 (nucleophile) is an active-site residue. Residue Asp185 is the Charge relay system of the active site. A disulfide bridge connects residues Cys240 and Cys253. His255 (charge relay system) is an active-site residue. Asn267 carries an N-linked (GlcNAc...) asparagine glycan. 2 disulfide bridges follow: Cys277–Cys288 and Cys291–Cys299. Residue Asn358 is glycosylated (N-linked (GlcNAc...) asparagine). A disulfide bridge links Cys430 with Cys449.

It belongs to the AB hydrolase superfamily. Lipase family.

It localises to the secreted. Its subcellular location is the cell membrane. The catalysed reaction is 1-hexadecanoyl-2-(9Z-octadecenoyl)-sn-glycero-3-phosphate + H2O = 2-(9Z-octadecenoyl)-sn-glycero-3-phosphate + hexadecanoate + H(+). Functionally, hydrolyzes specifically phosphatidic acid (PA) to produce 2-acyl lysophosphatidic acid (LPA; a potent bioactive lipid mediator) and fatty acid. Does not hydrolyze other phospholipids, like phosphatidylserine (PS), phosphatidylcholine (PC) and phosphatidylethanolamine (PE) or triacylglycerol (TG). This Danio rerio (Zebrafish) protein is Lipase member H (liph).